We begin with the raw amino-acid sequence, 1019 residues long: MLQGTCSVLLLWGILGAIQAQQQEVISPDTTERNNNCPEKTDCPIHVYFVLDTSESVTMQSPTDILLFHMKQFVPQFISQLQNEFYLDQVALSWRYGGLHFSDQVEVFSPPGSDRASFIKNLQGISSFRRGTFTDCALANMTEQIRQDRSKGTVHFAVVITDGHVTGSPCGGIKLQAERAREEGIRLFAVAPNQNLKEQGLRDIASTPHELYRNDYATMLPDSTEIDQDTINRIIKVMKHEAYGECYKVSCLEIPGPSGPKGYRGQKGAKGNMGEPGEPGQKGRQGDPGIEGPIGFPGPKGVPGFKGEKGEFGADGRKGAPGLAGKNGTDGQKGKLGRIGPPGCKGDPGNRGPDGYPGEAGSPGERGDQGGKGDPGRPGRRGPPGEIGAKGSKGYQGNSGAPGSPGVKGAKGGPGPRGPKGEPGRRGDPGTKGSPGSDGPKGEKGDPGPEGPRGLAGEVGNKGAKGDRGLPGPRGPQGALGEPGKQGSRGDPGDAGPRGDSGQPGPKGDPGRPGFSYPGPRGAPGEKGEPGPRGPEGGRGDFGLKGEPGRKGEKGEPADPGPPGEPGPRGPRGVPGPEGEPGPPGDPGLTECDVMTYVRETCGCCDCEKRCGALDVVFVIDSSESIGYTNFTLEKNFVINVVNRLGAIAKDPKSETGTRVGVVQYSHEGTFEAIQLDDERIDSLSSFKEAVKNLEWIAGGTWTPSALKFAYDRLIKESRRQKTRVFAVVITDGRHDPRDDDLNLRALCDRDVTVTAIGIGDMFHEKHESENLYSIACDKPQQVRNMTLFSDLVAEKFIDDMEDVLCPDPQIVCPDLPCQTELSVAQCTQRPVDIVFLLDGSERLGEQNFHKARRFVEQVARRLTLARRDDDPLNARVALLQFGGPGEQQVAFPLSHNLTAIHEALETTQYLNSFSHVGAGVVHAINAIVRSPRGGARRHAELSFVFLTDGVTGNDSLHESAHSMRKQNVVPTVLALGSDVDMDVLTTLSLGDRAAVFHEKDYDSLAQPGFFDRFIRWIC.

The signal sequence occupies residues 1–20; the sequence is MLQGTCSVLLLWGILGAIQA. Positions 21–256 are nonhelical region; that stretch reads QQQEVISPDT…YKVSCLEIPG (236 aa). The VWFA 1 domain occupies 46–234; the sequence is HVYFVLDTSE…EIDQDTINRI (189 aa). Asparagine 140 carries an N-linked (GlcNAc...) asparagine glycan. The disordered stretch occupies residues 257–588; the sequence is PSGPKGYRGQ…GEPGPPGDPG (332 aa). Residues 257 to 590 form a triple-helical region region; the sequence is PSGPKGYRGQ…PGPPGDPGLT (334 aa). The segment covering 287 to 305 has biased composition (low complexity); the sequence is DPGIEGPIGFPGPKGVPGF. Residues 306-318 are compositionally biased toward basic and acidic residues; that stretch reads KGEKGEFGADGRK. Asparagine 327 is a glycosylation site (N-linked (GlcNAc...) asparagine). Composition is skewed to basic and acidic residues over residues 365–377 and 419–429; these read ERGD…DPGR and PKGEPGRRGDP. 5 consecutive short sequence motifs (cell attachment site) follow at residues 366–368, 426–428, 489–491, 498–500, and 539–541; these read RGD. Basic and acidic residues predominate over residues 524 to 557; that stretch reads PGEKGEPGPRGPEGGRGDFGLKGEPGRKGEKGEP. A compositionally biased stretch (pro residues) spans 559 to 569; the sequence is DPGPPGEPGPR. Residues 591–1019 are nonhelical region; that stretch reads ECDVMTYVRE…FFDRFIRWIC (429 aa). 2 consecutive VWFA domains span residues 615-805 and 833-1014; these read DVVF…EDVL and DIVF…FDRF. Asparagine 630 carries N-linked (GlcNAc...) asparagine glycosylation. Threonine 701 carries the phosphothreonine modification. Residue serine 705 is modified to Phosphoserine. 3 N-linked (GlcNAc...) asparagine glycosylation sites follow: asparagine 785, asparagine 897, and asparagine 954.

It belongs to the type VI collagen family. Trimers composed of three different chains: alpha-1(VI), alpha-2(VI), and alpha-3(VI) or alpha-5(VI) or alpha-6(VI). Interacts with CSPG4. Post-translationally, prolines at the third position of the tripeptide repeating unit (G-X-Y) are hydroxylated in some or all of the chains.

The protein localises to the secreted. The protein resides in the extracellular space. It is found in the extracellular matrix. Its subcellular location is the membrane. Collagen VI acts as a cell-binding protein. This chain is Collagen alpha-2(VI) chain (COL6A2), found in Homo sapiens (Human).